The chain runs to 151 residues: Transcription antitermination protein NusB (151 aa).

It belongs to the NusB family.

Involved in transcription antitermination. Required for transcription of ribosomal RNA (rRNA) genes. Binds specifically to the boxA antiterminator sequence of the ribosomal RNA (rrn) operons. The chain is Transcription antitermination protein NusB from Hamiltonella defensa subsp. Acyrthosiphon pisum (strain 5AT).